A 432-amino-acid chain; its full sequence is Cytochrome c biogenesis protein CcsB (432 aa).

3 helical membrane-spanning segments follow: residues 14 to 34 (LRIAIGLLFVIALSSALGTAI), 72 to 92 (SSWFLALLAWLGLALILCSWR), and 162 to 182 (VGPMLVHLGLVLLMLGAVWGS).

It belongs to the Ccs1/CcsB family. As to quaternary structure, may interact with CcsA.

It is found in the cellular thylakoid membrane. Required during biogenesis of c-type cytochromes (cytochrome c6 and cytochrome f) at the step of heme attachment. This Prochlorococcus marinus (strain MIT 9303) protein is Cytochrome c biogenesis protein CcsB.